The sequence spans 213 residues: Leucyl/phenylalanyl-tRNA--protein transferase (213 aa).

Belongs to the L/F-transferase family.

It is found in the cytoplasm. It carries out the reaction N-terminal L-lysyl-[protein] + L-leucyl-tRNA(Leu) = N-terminal L-leucyl-L-lysyl-[protein] + tRNA(Leu) + H(+). It catalyses the reaction N-terminal L-arginyl-[protein] + L-leucyl-tRNA(Leu) = N-terminal L-leucyl-L-arginyl-[protein] + tRNA(Leu) + H(+). The catalysed reaction is L-phenylalanyl-tRNA(Phe) + an N-terminal L-alpha-aminoacyl-[protein] = an N-terminal L-phenylalanyl-L-alpha-aminoacyl-[protein] + tRNA(Phe). In terms of biological role, functions in the N-end rule pathway of protein degradation where it conjugates Leu, Phe and, less efficiently, Met from aminoacyl-tRNAs to the N-termini of proteins containing an N-terminal arginine or lysine. The protein is Leucyl/phenylalanyl-tRNA--protein transferase of Campylobacter lari (strain RM2100 / D67 / ATCC BAA-1060).